Reading from the N-terminus, the 459-residue chain is tRNA modification GTPase MnmE (459 aa).

Positions 21, 84, and 123 each coordinate (6S)-5-formyl-5,6,7,8-tetrahydrofolate. The region spanning Gly-219–Tyr-380 is the TrmE-type G domain. A K(+)-binding site is contributed by Asn-229. GTP is bound by residues Asn-229 to Ser-234, Thr-248 to Thr-254, and Asp-273 to Gly-276. A Mg(2+)-binding site is contributed by Ser-233. Residues Thr-248, Ile-250, and Thr-253 each contribute to the K(+) site. Thr-254 provides a ligand contact to Mg(2+). Position 459 (Lys-459) interacts with (6S)-5-formyl-5,6,7,8-tetrahydrofolate.

Belongs to the TRAFAC class TrmE-Era-EngA-EngB-Septin-like GTPase superfamily. TrmE GTPase family. In terms of assembly, homodimer. Heterotetramer of two MnmE and two MnmG subunits. K(+) serves as cofactor.

The protein localises to the cytoplasm. Functionally, exhibits a very high intrinsic GTPase hydrolysis rate. Involved in the addition of a carboxymethylaminomethyl (cmnm) group at the wobble position (U34) of certain tRNAs, forming tRNA-cmnm(5)s(2)U34. The chain is tRNA modification GTPase MnmE from Desulfitobacterium hafniense (strain Y51).